Consider the following 483-residue polypeptide: Probable 4-hydroxyphenylacetate 3-monooxygenase (483 aa).

Substrate contacts are provided by residues 104 to 108 (RSPDY) and histidine 150. FAD is bound by residues 150–152 (HTF), 156–159 (QVNR), and threonine 193. 206–207 (AP) lines the substrate pocket. 452-455 (DPIR) is a binding site for FAD.

This sequence belongs to the FADH(2)-utilizing monooxygenase family.

It catalyses the reaction 4-hydroxyphenylacetate + FADH2 + O2 = 3,4-dihydroxyphenylacetate + FAD + H2O + H(+). The protein operates within aromatic compound metabolism; 4-hydroxyphenylacetate degradation; pyruvate and succinate semialdehyde from 4-hydroxyphenylacetate: step 1/7. Catalyzes the hydroxylation of 4-hydroxyphenylacetic acid (4HPA), leading to the production of 3,4-dihydroxyphenylacetic acid (DHPA). This is Probable 4-hydroxyphenylacetate 3-monooxygenase (yoaI) from Bacillus subtilis (strain 168).